Reading from the N-terminus, the 704-residue chain is MSPRQPLVLVFLVLGCCSAAPRPHKPTVVVFPGDLRTNLTDKQLAEEYLFRYGYTQVAELSNDKQSLSRGLRLLQRRLALPETGELDKTTLEAMRAPRCGVPDLGKFQTFEGDLKWHHNDITYWIQNYSEDLPRDVIDDAFARAFAVWSAVTPLTFTRVYGPEADIIIQFGVREHGDGYPFDGKNGLLAHAFPPGPGIQGDAHFDDEELWTLGKGVVVPTHFGNADGAPCHFPFTFEGRSYSACTTDGRSDDTPWCSTTADYDTDRRFGFCPSEKLYAQDGNGDGKPCVFPFTFEGRSYSTCTTDGRSDGYRWCSTTADYDQDKLYGFCPTRVDSAVTGGNSAGEPCVFPFIFLGKQYSTCTREGRGDGHLWCATTSNFDRDKKWGFCPDQGYSLFLVAAHEFGHALGLDHSSVPEALMYPMYSFTEGPPLHEDDVRGIQHLYGPRPEPEPQPPTAPPTAPPTVCATGPPTTRPSERPTAGPTGPPAAGPTGPPTAGPSEAPTVPVDPAEDICKVNIFDAIAEIRNYLHFFKEGKYWRFSKGKGRRVQGPFLSPSTWPALPRKLDSAFEDGLTKKTFFFSGRQVWVYTGTSVVGPRRLDKLGLGPEVTQVTGALPQGGGKVLLFSRQRFWSFDVKTQTVDPRSAGSVEQMYPGVPLNTHDIFQYQEKAYFCQDRFYWRVNSRNEVNQVDEVGYVTFDILQCPED.

A signal peptide spans 1–19; that stretch reads MSPRQPLVLVFLVLGCCSA. Residues 20–106 constitute a propeptide, activation peptide; the sequence is APRPHKPTVV…PRCGVPDLGK (87 aa). N-linked (GlcNAc...) asparagine glycosylation occurs at asparagine 38. A Cysteine switch motif is present at residues 97-104; the sequence is PRCGVPDL. Cysteine 99 provides a ligand contact to Zn(2+). An N-linked (GlcNAc...) asparagine glycan is attached at asparagine 127. The Ca(2+) site is built by aspartate 131 and aspartate 165. Zn(2+) contacts are provided by histidine 175 and aspartate 177. Residues aspartate 182, glycine 183, asparagine 185, and leucine 187 each coordinate Ca(2+). Histidine 190 contacts Zn(2+). Ca(2+) contacts are provided by glycine 197, glutamine 199, and aspartate 201. Histidine 203 contributes to the Zn(2+) binding site. The Ca(2+) site is built by aspartate 205, aspartate 206, and glutamate 208. Fibronectin type-II domains are found at residues 225–273, 283–331, and 342–390; these read ADGA…FCPS, GDGK…FCPT, and SAGE…FCPD. Disulfide bonds link cysteine 230-cysteine 256, cysteine 244-cysteine 271, cysteine 288-cysteine 314, cysteine 302-cysteine 329, cysteine 347-cysteine 373, and cysteine 361-cysteine 388. Histidine 401 contacts Zn(2+). The active site involves glutamate 402. 2 residues coordinate Zn(2+): histidine 405 and histidine 411. Residues 434 to 507 form a disordered region; the sequence is DDVRGIQHLY…PSEAPTVPVD (74 aa). 2 stretches are compositionally biased toward pro residues: residues 450-461 and 483-496; these read EPQPPTAPPTAP and TGPP…PPTA. Cysteine 513 and cysteine 701 are disulfide-bonded. 4 Hemopexin repeats span residues 515 to 560, 561 to 605, 607 to 654, and 655 to 701; these read VNIF…WPAL, PRKL…GLGP, VTQV…YPGV, and PLNT…ILQC.

Belongs to the peptidase M10A family. In terms of assembly, exists as monomer or homodimer; disulfide-linked. Also exists as heterodimer with LCN2. Macrophages and transformed cell lines produce only the monomeric form. Interacts with ECM1. The cofactor is Zn(2+). Requires Ca(2+) as cofactor. In terms of processing, N- and O-glycosylated.

Its subcellular location is the secreted. It is found in the extracellular space. It localises to the extracellular matrix. The catalysed reaction is Cleavage of gelatin types I and V and collagen types IV and V.. Matrix metalloproteinase that plays an essential role in local proteolysis of the extracellular matrix and in leukocyte migration. Could play a role in bone osteoclastic resorption. Cleaves KiSS1 at a Gly-|-Leu bond. Cleaves NINJ1 to generate the Secreted ninjurin-1 form. Cleaves type IV and type V collagen into large C-terminal three quarter fragments and shorter N-terminal one quarter fragments. Degrades fibronectin but not laminin or Pz-peptide. In Canis lupus familiaris (Dog), this protein is Matrix metalloproteinase-9 (MMP9).